Reading from the N-terminus, the 162-residue chain is Phosphopantetheine adenylyltransferase (162 aa).

Serine 11 serves as a coordination point for substrate. ATP contacts are provided by residues 11–12 (SF) and histidine 19. Substrate contacts are provided by lysine 43, valine 76, and arginine 90. Residues 91–93 (GLR), glutamate 101, and 126–132 (HLYISSS) each bind ATP.

Belongs to the bacterial CoaD family. As to quaternary structure, homohexamer. Mg(2+) is required as a cofactor.

The protein localises to the cytoplasm. It catalyses the reaction (R)-4'-phosphopantetheine + ATP + H(+) = 3'-dephospho-CoA + diphosphate. The protein operates within cofactor biosynthesis; coenzyme A biosynthesis; CoA from (R)-pantothenate: step 4/5. Its activity is regulated as follows. Is inhibited by a series of cycloalkyl pyrimidines, which also show suppression of bacterial growth. In terms of biological role, reversibly transfers an adenylyl group from ATP to 4'-phosphopantetheine, yielding dephospho-CoA (dPCoA) and pyrophosphate. This chain is Phosphopantetheine adenylyltransferase, found in Streptococcus pneumoniae (strain ATCC BAA-255 / R6).